Here is a 370-residue protein sequence, read N- to C-terminus: Aminomethyltransferase (370 aa).

The protein belongs to the GcvT family. As to quaternary structure, the glycine cleavage system is composed of four proteins: P, T, L and H.

The enzyme catalyses N(6)-[(R)-S(8)-aminomethyldihydrolipoyl]-L-lysyl-[protein] + (6S)-5,6,7,8-tetrahydrofolate = N(6)-[(R)-dihydrolipoyl]-L-lysyl-[protein] + (6R)-5,10-methylene-5,6,7,8-tetrahydrofolate + NH4(+). Its function is as follows. The glycine cleavage system catalyzes the degradation of glycine. The chain is Aminomethyltransferase from Clostridium botulinum (strain Kyoto / Type A2).